Here is a 180-residue protein sequence, read N- to C-terminus: Protein NEQ441 (180 aa).

One can recognise an AMMECR1 domain in the interval 1–180 (MNLAKIARKI…VFEGQIFEED (180 aa)).

This chain is Protein NEQ441, found in Nanoarchaeum equitans (strain Kin4-M).